The sequence spans 1221 residues: MSSASTFGQNAWLVDEMFQQFQKDPKSVDKEWRELFEAQGGPNTTPATTEAQPSAPKESAKPAPKAAPAAKAAPRVETKPADKTAPKAKESSVPQQPKLPEPGQTPIRGIFKSIAKNMDISLEIPTATSVRDMPARLMFENRAMVNDQLKRTRGGKISFTHIIGYAMVKAVMAHPDMNNSYDVIDGKPTLIVPEHINLGLAIDLPQKDGSRALVVAAIKETEKMNFSEFLAAYEDIVARSRKGKLTMDDYQGVTVSLTNPGGIGTRHSVPRLTKGQGTIIGVGSMDYPAEFQGASEDRLAELGVGKLVTITSTYDHRVIQGAVSGEFLRTMSRLLTDDSFWDEIFDAMNVPYTPMRWAQDVPNTGVDKNTRVMQLIEAYRSRGHLIADTNPLSWVQPGMPVPDHRDLDIETHNLTIWDLDRTFNVGGFGGKETMTLREVLSRLRAAYTLKVGSEYTHILDRDERTWLQDRLEAGMPKPTQAEQKYILQKLNAAEAFENFLQTKYVGQKRFSLEGAEALIPLMDSAIDTAAGQGLDEVVIGMPHRGRLNVLFNIVGKPLASIFNEFEGQMEQGQIGGSGDVKYHLGSEGQHLQMFGDGEIKVSLTANPSHLEAVNPVMEGIVRAKQDYLDKGVDGKTVVPLLLHGDAAFAGLGIVPETINLAKLRGYDVGGTIHIVVNNQIGFTTTPDSSRSMHYATDYAKAFGCPVFHVNGDDPEAVVWVGQLATEYRRRFGKDVFIDLVCYRLRGHNEADDPSMTQPKMYELITGRETVRAQYTEDLLGRGDLSNEDAEAVVRDFHDQMESVFNEVKEGGKKQAEAQTGITGSQKLPHGLETNISREELLELGQAFANTPEGFNYHPRVAPVAKKRVSSVTEGGIDWAWGELLAFGSLANSGRLVRLAGEDSRRGTFTQRHAVAIDPATAEEFNPLHELAQSKGNNGKFLVYNSALTEYAGMGFEYGYSVGNEDSIVAWEAQFGDFANGAQTIIDEYVSSGEAKWGQTSKLILLLPHGYEGQGPDHSSARIERFLQLCAEGSMTVAQPSTPANHFHLLRRHALSDLKRPLVIFTPKSMLRNKAAASAPEDFTEVTKFQSVINDPNVADAAKVKKVMLVSGKLYYELAKRKEKDGRDDIAIVRIEMLHPIPFNRISEALAGYPNAEEVLFVQDEPANQGPWPFYQEHLPELIPNMPKMRRVSRRAQSSTATGVAKVHQLEEKQLIDEAFEA.

The 2-oxoglutarate dehydrogenase E1, N-terminal part stretch occupies residues 2–40; the sequence is SSASTFGQNAWLVDEMFQQFQKDPKSVDKEWRELFEAQG. The disordered stretch occupies residues 22–107; that stretch reads QKDPKSVDKE…KLPEPGQTPI (86 aa). The span at 23 to 36 shows a compositional bias: basic and acidic residues; sequence KDPKSVDKEWRELF. Polar residues predominate over residues 41 to 52; sequence GPNTTPATTEAQ. The interval 41–89 is linker; it reads GPNTTPATTEAQPSAPKESAKPAPKAAPAAKAAPRVETKPADKTAPKAK. Residues 53–73 are compositionally biased toward low complexity; it reads PSAPKESAKPAPKAAPAAKAA. Residues 74 to 90 show a composition bias toward basic and acidic residues; it reads PRVETKPADKTAPKAKE. The interval 90–337 is succinyltransferase E2; the sequence is ESSVPQQPKL…LRTMSRLLTD (248 aa). His-316 functions as the Proton acceptor; for succinyltransferase activity in the catalytic mechanism. The segment at 338 to 1221 is 2-oxoglutarate dehydrogenase E1, C-terminal part; sequence DSFWDEIFDA…KQLIDEAFEA (884 aa). Arg-544 lines the thiamine diphosphate pocket. Residues His-583 and Ser-608 each contribute to the 2-oxoglutarate site. Positions 608, 610, 645, 646, 647, and 678 each coordinate thiamine diphosphate. Asp-645 lines the Mg(2+) pocket. Residues Asn-678 and Ile-680 each coordinate Mg(2+). Position 1017 (His-1017) interacts with 2-oxoglutarate. Thr-1035, Arg-1051, Lys-1087, Ser-1090, and Arg-1144 together coordinate acetyl-CoA.

It in the N-terminal section; belongs to the alpha-ketoglutarate dehydrogenase family. This sequence in the C-terminal section; belongs to the 2-oxoacid dehydrogenase family. As to quaternary structure, homodimer. Part of an unusual ODH/PDH supercomplex, consisting of AceE (E1), AceF (E2), and Lpd (E3) together with OdhA (E1+E2). Interacts with the FHA domain of unphosphorylated OdhI via its C-terminal dehydrogenase domain. Mg(2+) serves as cofactor. It depends on thiamine diphosphate as a cofactor.

It catalyses the reaction N(6)-[(R)-lipoyl]-L-lysyl-[protein] + 2-oxoglutarate + H(+) = N(6)-[(R)-S(8)-succinyldihydrolipoyl]-L-lysyl-[protein] + CO2. The enzyme catalyses N(6)-[(R)-dihydrolipoyl]-L-lysyl-[protein] + succinyl-CoA = N(6)-[(R)-S(8)-succinyldihydrolipoyl]-L-lysyl-[protein] + CoA. Its pathway is carbohydrate metabolism; tricarboxylic acid cycle; succinyl-CoA from 2-oxoglutarate (dehydrogenase route): step 1/1. Its activity is regulated as follows. Inhibited by unphosphorylated OdhI, but not by phosphorylated OdhI. Its function is as follows. Catalyzes the E1 and E2 reactions as part of 2-oxoglutarate dehydrogenase (ODH) activity, to convert 2-oxoglutarate to succinyl-CoA and CO(2). OdhA has reductase activity with 2-oxoglutarate but does not react with pyruvate, and also displays transsuccinylase but no transacetylase activity. Since OdhA is not lipoylated, the succinyltransferase activity of its E2 domain is dependent on lipoyl residues of the acetyltransferase AceF. The protein is 2-oxoglutarate dehydrogenase E1/E2 component of Corynebacterium glutamicum (strain ATCC 13032 / DSM 20300 / JCM 1318 / BCRC 11384 / CCUG 27702 / LMG 3730 / NBRC 12168 / NCIMB 10025 / NRRL B-2784 / 534).